A 404-amino-acid polypeptide reads, in one-letter code: G1/S-specific cyclin-E2 (404 aa).

The disordered stretch occupies residues 1-45 (MSRRSSRLQAKQQPQASQTDSPQEAQIIQAKKRKTAQDVKKRKEE). Over residues 7–26 (RLQAKQQPQASQTDSPQEAQ) the composition is skewed to polar residues. Ser21 carries the post-translational modification Phosphoserine. The span at 35–45 (TAQDVKKRKEE) shows a compositional bias: basic and acidic residues. Lys348 carries the post-translational modification N6-lactoyllysine. Ser383 is modified (phosphoserine). Position 392 is a phosphothreonine (Thr392).

The protein belongs to the cyclin family. Cyclin E subfamily. Interacts with the CDK2 (in vivo) and CDK3 (in vitro) protein kinases to form a serine/threonine kinase holoenzyme complex. The cyclin subunit imparts substrate specificity to the complex. Phosphorylation by CDK2 triggers its release from CDK2 and degradation via the ubiquitin proteasome pathway. In terms of processing, lactylated at Lys-348. Delactylated by SIRT3.

The protein resides in the nucleus. Functionally, essential for the control of the cell cycle at the late G1 and early S phase. This is G1/S-specific cyclin-E2 (CCNE2) from Bos taurus (Bovine).